The primary structure comprises 319 residues: Acetyl-coenzyme A carboxylase carboxyl transferase subunit alpha (319 aa).

One can recognise a CoA carboxyltransferase C-terminal domain in the interval 35–296 (NLDEEVQRLR…KAQLLADLLD (262 aa)).

Belongs to the AccA family. In terms of assembly, acetyl-CoA carboxylase is a heterohexamer composed of biotin carboxyl carrier protein (AccB), biotin carboxylase (AccC) and two subunits each of ACCase subunit alpha (AccA) and ACCase subunit beta (AccD).

Its subcellular location is the cytoplasm. The catalysed reaction is N(6)-carboxybiotinyl-L-lysyl-[protein] + acetyl-CoA = N(6)-biotinyl-L-lysyl-[protein] + malonyl-CoA. Its pathway is lipid metabolism; malonyl-CoA biosynthesis; malonyl-CoA from acetyl-CoA: step 1/1. Component of the acetyl coenzyme A carboxylase (ACC) complex. First, biotin carboxylase catalyzes the carboxylation of biotin on its carrier protein (BCCP) and then the CO(2) group is transferred by the carboxyltransferase to acetyl-CoA to form malonyl-CoA. The sequence is that of Acetyl-coenzyme A carboxylase carboxyl transferase subunit alpha from Pectobacterium atrosepticum (strain SCRI 1043 / ATCC BAA-672) (Erwinia carotovora subsp. atroseptica).